A 564-amino-acid chain; its full sequence is Pachytene checkpoint protein 2 (564 aa).

Glycine 314–threonine 321 is a binding site for ATP.

The protein belongs to the AAA ATPase family. PCH2 subfamily.

The protein resides in the nucleus. Its subcellular location is the nucleolus. It is found in the chromosome. Required for the pachytene checkpoint, the meiotic checkpoint that prevents chromosome segregation when defects in recombination and synaptonemal complex formation occurred. Represses meiotic recombination in the rDNA, probably by excluding the meiosis-specific protein HOP1 from the nucleolar region. The sequence is that of Pachytene checkpoint protein 2 (PCH2) from Saccharomyces cerevisiae (strain ATCC 204508 / S288c) (Baker's yeast).